The primary structure comprises 235 residues: Exosome complex component Rrp4 (235 aa).

One can recognise an S1 motif domain in the interval 63–137 (GDLVIGYVTD…DEYPIILTLK (75 aa)). Residues 147–203 (GTVVEITPVKVPRVIGKRGSMLNTLMELGCDIVVGQNGRIWVKCKDPRDEVFLASLI) enclose the KH domain.

It belongs to the RRP4 family. Component of the archaeal exosome complex. Forms a trimer of Rrp4 and/or Csl4 subunits. The trimer associates with a hexameric ring-like arrangement composed of 3 Rrp41-Rrp42 heterodimers.

The protein localises to the cytoplasm. Its function is as follows. Non-catalytic component of the exosome, which is a complex involved in RNA degradation. Increases the RNA binding and the efficiency of RNA degradation. Confers strong poly(A) specificity to the exosome. This is Exosome complex component Rrp4 from Pyrobaculum aerophilum (strain ATCC 51768 / DSM 7523 / JCM 9630 / CIP 104966 / NBRC 100827 / IM2).